The sequence spans 408 residues: Probable medium-chain specific acyl-CoA dehydrogenase 2, mitochondrial (408 aa).

A mitochondrion-targeting transit peptide spans 1–5 (MLSRL). FAD is bound by residues 143 to 152 (YCVTEPGAGS) and 176 to 178 (WIT). Ser-152 contacts substrate. Substrate is bound at residue 263–266 (DMTR). FAD is bound by residues 291-293 (RKA), 301-302 (HQ), and 355-359 (MLFRC). The active-site Proton acceptor is the Glu-382. Gly-383 provides a ligand contact to substrate. An FAD-binding site is contributed by 384-386 (TSQ). Residue Arg-394 participates in substrate binding.

It belongs to the acyl-CoA dehydrogenase family. As to quaternary structure, homotetramer. FAD serves as cofactor.

The protein localises to the mitochondrion matrix. The enzyme catalyses a medium-chain 2,3-saturated fatty acyl-CoA + oxidized [electron-transfer flavoprotein] + H(+) = a medium-chain (2E)-enoyl-CoA + reduced [electron-transfer flavoprotein]. Its pathway is lipid metabolism; mitochondrial fatty acid beta-oxidation. Functionally, this enzyme is specific for acyl chain lengths of 4 to 16. The chain is Probable medium-chain specific acyl-CoA dehydrogenase 2, mitochondrial from Caenorhabditis briggsae.